We begin with the raw amino-acid sequence, 107 residues long: MSKIIKFPGVEVEAEAPAPRVEAPSKAPPRFTFAKGVQALVRFVWVVTVLVWPVAKWIISIDVFFQFLRMLYHWNTLGVHAGWTFLVHFAVLTALTYFVSLYKPKGL.

This is Protein KleE (kleE) from Escherichia coli.